Here is a 439-residue protein sequence, read N- to C-terminus: Glycosyl hydrolase DigH (439 aa).

Positions 1–27 are cleaved as a signal peptide; the sequence is MDICSRNKKLTIRRPAILVALALLLCS. Cys-28 carries N-palmitoyl cysteine lipidation. Cys-28 carries S-diacylglycerol cysteine lipidation. The disordered stretch occupies residues 34–54; sequence ESMVTPPAGSKPPATTQQSSQ.

It belongs to the glycosyl hydrolase-like 10 (GHL10) family.

It is found in the cell outer membrane. In terms of biological role, divisome-localized glycosyl hydrolase that cleaves peptide-free (denuded) peptidoglycans. This chain is Glycosyl hydrolase DigH, found in Escherichia coli O157:H7.